A 354-amino-acid polypeptide reads, in one-letter code: 3-isopropylmalate dehydrogenase (354 aa).

Residues arginine 96, arginine 106, arginine 132, and aspartate 223 each contribute to the substrate site. Mg(2+)-binding residues include aspartate 223, aspartate 247, and aspartate 251. NAD(+) is bound at residue 283–295 (GSAPDIAGQGKAD).

The protein belongs to the isocitrate and isopropylmalate dehydrogenases family. LeuB type 2 subfamily. Homodimer. Requires Mg(2+) as cofactor. Mn(2+) serves as cofactor.

The protein resides in the cytoplasm. It catalyses the reaction (2R,3S)-3-isopropylmalate + NAD(+) = 4-methyl-2-oxopentanoate + CO2 + NADH. The protein operates within amino-acid biosynthesis; L-leucine biosynthesis; L-leucine from 3-methyl-2-oxobutanoate: step 3/4. Catalyzes the oxidation of 3-carboxy-2-hydroxy-4-methylpentanoate (3-isopropylmalate) to 3-carboxy-4-methyl-2-oxopentanoate. The product decarboxylates to 4-methyl-2 oxopentanoate. The polypeptide is 3-isopropylmalate dehydrogenase (Thermobifida fusca (strain YX)).